The primary structure comprises 448 residues: Probable ribonuclease FAU-1 (448 aa).

This sequence belongs to the FAU-1 family.

Its function is as follows. Probable RNase involved in rRNA stability through maturation and/or degradation of precursor rRNAs. Binds to RNA in loop regions with AU-rich sequences. The chain is Probable ribonuclease FAU-1 from Pyrobaculum calidifontis (strain DSM 21063 / JCM 11548 / VA1).